A 175-amino-acid chain; its full sequence is NADH-quinone oxidoreductase subunit I (175 aa).

4Fe-4S ferredoxin-type domains are found at residues 64–93 (KRDEQGRENCTACGLCAVSCPAEAITIIAD) and 110–139 (SLYEINMLRCIFCGLCEEACPKDAVYLTEE). [4Fe-4S] cluster is bound by residues Cys73, Cys76, Cys79, Cys83, Cys119, Cys122, Cys125, and Cys129.

The protein belongs to the complex I 23 kDa subunit family. In terms of assembly, NDH-1 is composed of 14 different subunits. Subunits NuoA, H, J, K, L, M, N constitute the membrane sector of the complex. It depends on [4Fe-4S] cluster as a cofactor.

The protein resides in the cell inner membrane. The catalysed reaction is a quinone + NADH + 5 H(+)(in) = a quinol + NAD(+) + 4 H(+)(out). Functionally, NDH-1 shuttles electrons from NADH, via FMN and iron-sulfur (Fe-S) centers, to quinones in the respiratory chain. The immediate electron acceptor for the enzyme in this species is believed to be ubiquinone. Couples the redox reaction to proton translocation (for every two electrons transferred, four hydrogen ions are translocated across the cytoplasmic membrane), and thus conserves the redox energy in a proton gradient. The sequence is that of NADH-quinone oxidoreductase subunit I from Cytophaga hutchinsonii (strain ATCC 33406 / DSM 1761 / CIP 103989 / NBRC 15051 / NCIMB 9469 / D465).